Here is a 109-residue protein sequence, read N- to C-terminus: Envelope small membrane protein (109 aa).

The Virion surface portion of the chain corresponds to 1–11 (MTNLLNKSLEE). The chain crosses the membrane as a helical span at residues 12-32 (NGSFLTAVYIFVGFVALYLLG). Residues 33–109 (RALQAFVQAA…QDVQRNKLYS (77 aa)) are Intravirion-facing. Positions 89–109 (NGWNNKNPANFQDVQRNKLYS) are disordered. Positions 90–109 (GWNNKNPANFQDVQRNKLYS) are enriched in polar residues.

It belongs to the gammacoronaviruses E protein family. Homooligomer. Interacts with the M membrane protein in the budding compartment of the host cell, which is located between endoplasmic reticulum and the Golgi complex. The cytoplasmic tails of both proteins are important for this function. Interacts with Nucleoprotein.

Its subcellular location is the host Golgi apparatus membrane. Plays a central role in virus morphogenesis and assembly. Acts as a viroporin and self-assembles in host membranes forming pentameric protein-lipid pores that allow ion transport. Also plays a role in the induction of apoptosis. This is Envelope small membrane protein from Avian infectious bronchitis virus (strain KB8523) (IBV).